Consider the following 186-residue polypeptide: Putative manganese efflux pump MntP (186 aa).

The next 6 membrane-spanning stretches (helical) occupy residues 3–23 (PIAL…AAIG), 39–59 (IGII…LIGK), 65–85 (VEAW…LHMI), 109–129 (CLTA…LAFI), 133–153 (IWIA…IGIM), and 166–186 (AEIF…YGQL).

The protein belongs to the MntP (TC 9.B.29) family.

It is found in the cell inner membrane. Probably functions as a manganese efflux pump. In Alcanivorax borkumensis (strain ATCC 700651 / DSM 11573 / NCIMB 13689 / SK2), this protein is Putative manganese efflux pump MntP.